A 595-amino-acid polypeptide reads, in one-letter code: P2X purinoceptor 7 (595 aa).

The Cytoplasmic portion of the chain corresponds to 1–22; it reads MPACCSWNDVLQYETNKVTRIQ. C4 carries the S-palmitoyl cysteine lipid modification. Residues 23 to 46 form a helical membrane-spanning segment; that stretch reads STNYGTVKWVLHMIVFSYISFALV. Residues 47–328 are Extracellular-facing; it reads SDKLYQRKEP…ILVFGTGGKF (282 aa). The N-linked (GlcNAc...) asparagine glycan is linked to N74. Intrachain disulfides connect C119–C168, C129–C152, and C135–C162. ADP-ribosylarginine; by ART2B occurs at positions 125 and 133. N-linked (GlcNAc...) asparagine glycosylation is present at N187. Position 189 (T189) interacts with ATP. 2 N-linked (GlcNAc...) asparagine glycosylation sites follow: N202 and N213. C216 and C226 form a disulfide bridge. N241 carries an N-linked (GlcNAc...) asparagine glycan. Cysteines 260 and 269 form a disulfide. ATP-binding residues include R294 and K311. A helical membrane pass occupies residues 329–353; sequence DIIQLVVYIGSTLSYFGLATVCIDL. S342 serves as a coordination point for Na(+). Topologically, residues 354 to 595 are cytoplasmic; the sequence is LINTYSSAFC…GQYSGFKYPY (242 aa). The segment at 360 to 377 is C-cys anchor; the sequence is SAFCRSGVYPYCKCCEPC. Residues C363, C374, and C377 are each lipidated (S-palmitoyl cysteine). Phosphoserine is present on S390. Residues 395 to 595 form a cytoplasmic ballast region; sequence KPTLKYVSFV…GQYSGFKYPY (201 aa). Residues C479, C499, and C506 each contribute to the Zn(2+) site. R546, H547, Y550, and A567 together coordinate GTP. Residue C572 coordinates Zn(2+). GTP-binding residues include K583, S589, and G590.

The protein belongs to the P2X receptor family. In terms of assembly, homotrimers. Interacts with LAMA3, ITGB2, ACTB, ACTN4, SVIL, MPP3, HSPA1, HSPCB, HSPA8, PIK230 and PTPRB. Interacts (via C-terminus) with EMP2. Post-translationally, phosphorylation results in its inactivation. ADP-ribosylation at Arg-125 is necessary and sufficient to activate P2RX7 and gate the channel. In terms of processing, palmitoylation of several cysteines in the C-terminal cytoplasmic tail is required for efficient localization to cell surface. Palmitoylation prevents channel desensitization by physically anchoring the palmitoylated groups to the membrane.

The protein localises to the cell membrane. The catalysed reaction is Ca(2+)(in) = Ca(2+)(out). The enzyme catalyses K(+)(in) = K(+)(out). It catalyses the reaction Na(+)(in) = Na(+)(out). Activated by high extracellular ATP levels (0.1-2.5 mM). The synthetic analog 2'(3')-O-(4-benzoylbenzoyl)ATP (BzATP) acts as a potent agonist. Does not undergo desensitization, instead, undergoes a facilitation process where currents progressively increase with repetitive or prolonged agonist application. Palmitoylation prevents channel desensitization. The permeability of the P2RX7 channel is modulated by the amount of cholesterol in the plasma membrane. ATP-gated nonselective transmembrane cation channel. Requires high millimolar-range concentrations of ATP to become activated. ATP binding trigers the rapid opening of the channel and allows Na(+) and Ca(2+) influx and K(+) efflux. Has also the ability to form a large pore in the cell membrane, allowing the passage of large cationic molecules. In microglia, may mediate NADPH transport across the plasma membrane. In immune cells, P2RX7 acts as a molecular sensor in pathological inflammatory states by detecting and responding to high local concentrations of extracellar ATP. In microglial cells, P2RX7 activation leads to the release of pro-inflammatory cytokines, such as IL-1beta and IL-18, through the activation of the NLRP3 inflammasome and caspase-1. Cooperates with KCNK6 to activate NLRP3 inflammasome. Activates death pathways leading to apoptosis and autophagy. Activates death pathways leading to pyroptosis. The sequence is that of P2X purinoceptor 7 (P2rx7) from Mus musculus (Mouse).